The chain runs to 87 residues: Small ribosomal subunit protein bS20 (87 aa).

The segment at 1–26 (MANIKSAKKRAIQAEKARKHNASRRS) is disordered.

Belongs to the bacterial ribosomal protein bS20 family.

Functionally, binds directly to 16S ribosomal RNA. In Tolumonas auensis (strain DSM 9187 / NBRC 110442 / TA 4), this protein is Small ribosomal subunit protein bS20.